Here is a 175-residue protein sequence, read N- to C-terminus: Cuticle protein CP1876 (175 aa).

Calcified shell.

In Cancer pagurus (Rock crab), this protein is Cuticle protein CP1876.